The sequence spans 212 residues: Thymidylate kinase (212 aa).

11-18 (GLEGAGKS) is an ATP binding site.

Belongs to the thymidylate kinase family.

The catalysed reaction is dTMP + ATP = dTDP + ADP. Its function is as follows. Phosphorylation of dTMP to form dTDP in both de novo and salvage pathways of dTTP synthesis. In Vibrio vulnificus (strain CMCP6), this protein is Thymidylate kinase.